A 35-amino-acid polypeptide reads, in one-letter code: Kappa-theraphotoxin-Tb1b (35 aa).

Cystine bridges form between Cys3-Cys18, Cys10-Cys23, and Cys17-Cys30.

The protein belongs to the neurotoxin 10 (Hwtx-1) family. 58 subfamily. Monomer. As to expression, expressed by the venom gland.

The protein localises to the secreted. Its function is as follows. Low-affinity blocker of Kv4.2/KCND2 voltage-gated potassium channels. Is presumed to shift the voltage-dependence of channel activation to more depolarized potentials and to bind to the S3-S4 linker region of the voltage sensor domain. The polypeptide is Kappa-theraphotoxin-Tb1b (Theraphosa blondi (Goliath birdeating spider)).